The sequence spans 179 residues: Replication restart protein DnaT (179 aa).

The tract at residues serine 154 to glycine 179 is disordered.

Belongs to the DnaT family. In terms of assembly, homooligomerizes. Interacts with PriB. Component of the replication restart primosome. Primosome assembly occurs via a 'hand-off' mechanism. PriA binds to replication forks, subsequently PriB then DnaT bind; DnaT then displaces ssDNA to generate the helicase loading substrate.

Functionally, involved in the restart of stalled replication forks, which reloads the replicative helicase on sites other than the origin of replication. Can function in multiple replication restart pathways. Displaces ssDNA from a PriB-ssDNA complex. Probably forms a spiral filament on ssDNA. The sequence is that of Replication restart protein DnaT from Escherichia coli O127:H6 (strain E2348/69 / EPEC).